The sequence spans 122 residues: Small ribosomal subunit protein bS16 (122 aa).

The protein belongs to the bacterial ribosomal protein bS16 family.

This is Small ribosomal subunit protein bS16 from Prochlorococcus marinus (strain MIT 9313).